Consider the following 421-residue polypeptide: Esterase LipQ (421 aa).

Catalysis depends on residues Ser249, Asp344, and His377.

This sequence belongs to the 'GDXG' lipolytic enzyme family.

It carries out the reaction hexadecanoate ester + H2O = an aliphatic alcohol + hexadecanoate + H(+). Its function is as follows. Shows lipase activity. Is highly immunogenic and may play an important role in the virulence and pathogenesis of M.tuberculosis infection, by altering the balance of cytokines. Significantly down-regulates the expression level of pro-inflammatory cytokines (TNF-alpha and IFN-gamma) and up-regulates the level of anti-inflammatory cytokines such as IL-4 and IL-10 as compared to LPS stimulated macrophages. Also inhibits the expression of iNOS, TLR2 and transcription factor NF-kappa-B in LPS stimulated macrophages whereas the expression of TLR-4 remains unchanged. In Mycobacterium tuberculosis (strain ATCC 25618 / H37Rv), this protein is Esterase LipQ.